We begin with the raw amino-acid sequence, 159 residues long: Putative UPF0479 protein YDR545C-A (159 aa).

2 helical membrane-spanning segments follow: residues 38–58 (IVFC…KVLQ) and 135–155 (VPMI…ISQH).

Belongs to the UPF0479 family.

It is found in the membrane. The chain is Putative UPF0479 protein YDR545C-A from Saccharomyces cerevisiae (strain ATCC 204508 / S288c) (Baker's yeast).